Here is a 355-residue protein sequence, read N- to C-terminus: Alanine racemase (355 aa).

Lysine 34 acts as the Proton acceptor; specific for D-alanine in catalysis. N6-(pyridoxal phosphate)lysine is present on lysine 34. Arginine 133 provides a ligand contact to substrate. Tyrosine 249 serves as the catalytic Proton acceptor; specific for L-alanine. Position 297 (methionine 297) interacts with substrate.

This sequence belongs to the alanine racemase family. It depends on pyridoxal 5'-phosphate as a cofactor.

It catalyses the reaction L-alanine = D-alanine. It functions in the pathway amino-acid biosynthesis; D-alanine biosynthesis; D-alanine from L-alanine: step 1/1. Its function is as follows. Catalyzes the interconversion of L-alanine and D-alanine. May also act on other amino acids. The sequence is that of Alanine racemase (alr) from Rickettsia africae (strain ESF-5).